Consider the following 671-residue polypeptide: Palmitoleoyl-protein carboxylesterase NOTUM (671 aa).

A signal peptide spans Met1–Ser46. N-linked (GlcNAc...) asparagine glycosylation occurs at Asn95. Catalysis depends on charge relay system residues Ser237 and Asp338. An N-linked (GlcNAc...) asparagine glycan is attached at Asn372. His384 acts as the Charge relay system in catalysis. A disordered region spans residues His411–Pro592. A compositionally biased stretch (basic residues) spans Asn439–His454. Over residues Leu470–Arg486 the composition is skewed to basic and acidic residues. Positions Gln487 to Gln497 are enriched in basic residues. Residues Gln505–Ser514 are compositionally biased toward basic and acidic residues. Over residues Pro570–Thr583 the composition is skewed to polar residues. Asn578 and Asn612 each carry an N-linked (GlcNAc...) asparagine glycan.

It belongs to the pectinacetylesterase family. Notum subfamily.

The protein localises to the secreted. It localises to the cell surface. It catalyses the reaction [Wnt protein]-O-(9Z)-hexadecenoyl-L-serine + H2O = [Wnt protein]-L-serine + (9Z)-hexadecenoate + H(+). Its function is as follows. Carboxylesterase that acts as a key negative regulator of the Wnt signaling pathway by specifically mediating depalmitoleoylation of WNT proteins. Serine palmitoleoylation of WNT proteins is required for efficient binding to frizzled receptors. Also acts as a regulator of long-range activity of Hedgehog (hh), possibly by regulating the switch between low and high level hh pathway signaling. In Drosophila melanogaster (Fruit fly), this protein is Palmitoleoyl-protein carboxylesterase NOTUM.